The primary structure comprises 502 residues: Bone morphogenetic protein receptor type-1B (502 aa).

Residues 1 to 13 (MLLRSAGKLNVGT) form the signal peptide. The interval 1 to 25 (MLLRSAGKLNVGTKKEDGESTAPTP) is disordered. Residues 14 to 126 (KKEDGESTAP…DFVDGPIHHR (113 aa)) lie on the Extracellular side of the membrane. 5 disulfide bridges follow: C32-C53, C34-C38, C47-C71, C81-C95, and C96-C102. A helical membrane pass occupies residues 127-148 (ALLISVTVCSLLLVLIILFCYF). Residues 149–502 (RYKRQETRPR…KMSESQDIKL (354 aa)) lie on the Cytoplasmic side of the membrane. The region spanning 174–203 (ESLRDLIEQSQSSGSGSGLPLLVQRTIAKQ) is the GS domain. A Protein kinase domain is found at 204-494 (IQMVKQIGKG…LRVKKTLAKM (291 aa)). ATP-binding positions include 210 to 218 (IGKGRYGEV) and K231. D332 acts as the Proton acceptor in catalysis.

This sequence belongs to the protein kinase superfamily. TKL Ser/Thr protein kinase family. TGFB receptor subfamily. Interacts with high affinity with GDF5; positively regulates chondrocyte differentiation. Interacts with SCUBE3. Interacts with TSC22D1/TSC-22. Interacts with TGFBR3. Mg(2+) is required as a cofactor. Mn(2+) serves as cofactor. In terms of processing, autophosphorylated.

It is found in the cell membrane. The enzyme catalyses L-threonyl-[receptor-protein] + ATP = O-phospho-L-threonyl-[receptor-protein] + ADP + H(+). It carries out the reaction L-seryl-[receptor-protein] + ATP = O-phospho-L-seryl-[receptor-protein] + ADP + H(+). In terms of biological role, on ligand binding, forms a receptor complex consisting of two type II and two type I transmembrane serine/threonine kinases. Type II receptors phosphorylate and activate type I receptors which autophosphorylate, then bind and activate SMAD transcriptional regulators. Receptor for BMP7/OP-1 and GDF5. Positively regulates chondrocyte differentiation through GDF5 interaction. The chain is Bone morphogenetic protein receptor type-1B (BMPR1B) from Homo sapiens (Human).